Reading from the N-terminus, the 401-residue chain is Adaptive-response sensory kinase SasA (401 aa).

A Histidine kinase domain is found at 175-400 (MLVHDLRNPL…WFHFTLPVYP (226 aa)). His-178 carries the post-translational modification Phosphohistidine; by autocatalysis.

In terms of assembly, homooligomerizes. Interacts with KaiC. Participates in the KaiABC clock complex, whose core is composed of a KaiC homohexamer, 6 KaiB and up to 6 KaiA dimers. SasA and KaiB(fs) compete to bind to KaiC.

It carries out the reaction ATP + protein L-histidine = ADP + protein N-phospho-L-histidine.. Its function is as follows. Member of the two-component regulatory system SasA/RpaA involved in genome-wide circadian gene expression. One of several clock output pathways. Participates in the Kai clock protein complex, the main circadian regulator in cyanobacteria, via its interaction with KaiC. KaiC enhances the autophosphorylation activity of SasA, which then transfers its phosphate group to RpaA to activate it. In addition to its output function, recruits fold-shifted KaiB (KaiB(fs)) to KaiC to cooperatively form the KaiB(6):KaiC(6) complex (independent of SasA kinase activity). Required for robustness of the circadian rhythm of gene expression and is involved in clock output, also required for adaptation to light/dark cycles. This Nostoc sp. (strain PCC 7120 / SAG 25.82 / UTEX 2576) protein is Adaptive-response sensory kinase SasA.